The following is a 1883-amino-acid chain: AF4/FMR2 family member lilli (1883 aa).

A compositionally biased stretch (low complexity) spans 1–45 (MAQQQQQQHLQQQQQQHHQQQQLQQLQQQQQLPQYNNNLYNLNYN). Disordered stretches follow at residues 1–88 (MAQQ…SEGD), 140–311 (INST…EKDI), 329–381 (SIAA…SCTT), 449–540 (MPTP…HHQH), 609–654 (LGGG…HLSR), 796–827 (SISS…TLQI), 844–901 (MQQK…KKHA), 922–962 (TAAA…LAKG), 992–1018 (VAGS…LHAA), 1039–1075 (TAAA…ATAT), 1115–1145 (KNNR…QHKQ), 1170–1238 (QHQQ…KSDK), 1358–1413 (YAAE…GART), 1450–1510 (EHGV…DQVS), 1543–1583 (ANGS…KATT), 1595–1641 (QTST…PPSD), and 1783–1803 (PSNS…RIVP). Residues 57–80 (REKYERQQGIQSDDRETSLFEAPR) are compositionally biased toward basic and acidic residues. Low complexity-rich tracts occupy residues 140 to 154 (INST…SLLP), 161 to 178 (QQQQ…QQQQ), 223 to 253 (SASS…ASTA), and 362 to 381 (PLNS…SCTT). A compositionally biased stretch (pro residues) spans 450-462 (PTPPKASPTPPTA). Residue Thr458 is modified to Phosphothreonine. Residues 466–479 (LKSEKNHSLEKQDS) show a composition bias toward basic and acidic residues. A compositionally biased stretch (acidic residues) spans 481-491 (LENDLELSESD). Phosphoserine occurs at positions 488 and 490. Low complexity predominate over residues 500–540 (SAGNSSNSSETDSSESGSEASSKGEAQQQQQQQQQLLHHQH). Positions 609 to 625 (LGGGGGSGSTGGGGGSS) are enriched in gly residues. 2 stretches are compositionally biased toward low complexity: residues 626-639 (SSGM…SSSN) and 796-813 (SISS…SAAG). A compositionally biased stretch (basic residues) spans 867-877 (PRQKKPRKKKM). 2 positions are modified to phosphoserine: Ser887 and Ser888. A DNA-binding region (a.T hook) is located at residues 930–942 (KKGRGRPRKQQQQ). Over residues 939-962 (QQQQLQQTQSGNLSSASAGSLAKG) the composition is skewed to low complexity. A phosphoserine mark is found at Ser953 and Ser955. 5 stretches are compositionally biased toward low complexity: residues 1124–1145 (SSSN…QHKQ), 1170–1186 (QHQQ…QQQQ), 1200–1222 (SSSS…SSSS), 1362–1376 (QQQQ…QQLH), and 1385–1399 (HYQQ…KAQQ). Positions 1450-1467 (EHGVKPEPELDAGYEAKY) are enriched in basic and acidic residues. Ser1546 bears the Phosphoserine mark. Thr1548 carries the phosphothreonine modification. Low complexity-rich tracts occupy residues 1558 to 1583 (QQQQ…KATT) and 1595 to 1606 (QTSTTATQQPTT). Pro residues predominate over residues 1614–1625 (TPPPVAPPPPPR). A compositionally biased stretch (low complexity) spans 1783 to 1794 (PSNSVGSQGSGS).

This sequence belongs to the AF4 family.

It is found in the nucleus. In terms of biological role, has a role in transcriptional regulation. Acts in parallel with the Ras/MAPK and the PI3K/PKB pathways in the control of cell identity and cellular growth. Essential for regulation of the cytoskeleton and cell growth but not for cell proliferation or growth rate. Required specifically for the microtubule-based basal transport of lipid droplets. Plays a partially redundant function downstream of Raf in cell fate specification in the developing eye. Pair-rule protein that regulates embryonic cellularization, gastrulation and segmentation. The sequence is that of AF4/FMR2 family member lilli from Drosophila grimshawi (Hawaiian fruit fly).